The following is a 251-amino-acid chain: Flap endonuclease Xni (251 aa).

Residue Asp104 coordinates Mg(2+). The region spanning 160-249 (VLPRQLPDYW…IDGNLQQLRL (90 aa)) is the 5'-3' exonuclease domain. Residues Leu171, Ala172, Pro180, Val182, and Ile185 each coordinate K(+). Positions 184–189 (GIGPKS) are interaction with DNA.

The protein belongs to the Xni family. Mg(2+) is required as a cofactor. K(+) serves as cofactor.

Its function is as follows. Has flap endonuclease activity. During DNA replication, flap endonucleases cleave the 5'-overhanging flap structure that is generated by displacement synthesis when DNA polymerase encounters the 5'-end of a downstream Okazaki fragment. This is Flap endonuclease Xni from Salmonella paratyphi A (strain ATCC 9150 / SARB42).